The sequence spans 266 residues: Type III pantothenate kinase (266 aa).

11–18 lines the ATP pocket; sequence DIGNTSTV. 111–114 is a binding site for substrate; it reads GADR. Residue D113 is the Proton acceptor of the active site. K(+) is bound at residue D135. T138 is an ATP binding site. T190 contributes to the substrate binding site.

It belongs to the type III pantothenate kinase family. Homodimer. It depends on NH4(+) as a cofactor. K(+) serves as cofactor.

It is found in the cytoplasm. The enzyme catalyses (R)-pantothenate + ATP = (R)-4'-phosphopantothenate + ADP + H(+). The protein operates within cofactor biosynthesis; coenzyme A biosynthesis; CoA from (R)-pantothenate: step 1/5. Functionally, catalyzes the phosphorylation of pantothenate (Pan), the first step in CoA biosynthesis. The chain is Type III pantothenate kinase from Deinococcus geothermalis (strain DSM 11300 / CIP 105573 / AG-3a).